A 326-amino-acid chain; its full sequence is Homocysteine S-methyltransferase 1 (326 aa).

The 315-residue stretch at 9-323 (LLEDLIKKCG…STINAISRDL (315 aa)) folds into the Hcy-binding domain. The Zn(2+) site is built by Cys241, Cys308, and Cys309.

In terms of assembly, monomer. Requires Zn(2+) as cofactor. In terms of tissue distribution, expressed predominantly in roots. Expressed in rosette leaves, cauline leaves and developing seeds.

The catalysed reaction is S-methyl-L-methionine + L-homocysteine = 2 L-methionine + H(+). Strongly inhibited by methionine. Functionally, catalyzes methyl transfer from S-methylmethionine (SMM) to adenosyl-L-homocysteine (AdoMet). SMM degradation (by HMT-1, HMT-2 and HMT-3) and biosynthesis (by MMT1) constitute the SMM cycle in plants, which is probably required to achieve short term control of AdoMet level. The chain is Homocysteine S-methyltransferase 1 (HMT-1) from Arabidopsis thaliana (Mouse-ear cress).